We begin with the raw amino-acid sequence, 293 residues long: 4-diphosphocytidyl-2-C-methyl-D-erythritol kinase (293 aa).

Lys-10 is an active-site residue. Position 94 to 104 (94 to 104 (PVSAGLAGGSS)) interacts with ATP. The active site involves Asp-136.

It belongs to the GHMP kinase family. IspE subfamily.

It catalyses the reaction 4-CDP-2-C-methyl-D-erythritol + ATP = 4-CDP-2-C-methyl-D-erythritol 2-phosphate + ADP + H(+). It functions in the pathway isoprenoid biosynthesis; isopentenyl diphosphate biosynthesis via DXP pathway; isopentenyl diphosphate from 1-deoxy-D-xylulose 5-phosphate: step 3/6. In terms of biological role, catalyzes the phosphorylation of the position 2 hydroxy group of 4-diphosphocytidyl-2C-methyl-D-erythritol. The protein is 4-diphosphocytidyl-2-C-methyl-D-erythritol kinase of Listeria monocytogenes serovar 1/2a (strain ATCC BAA-679 / EGD-e).